A 747-amino-acid chain; its full sequence is Protein O-mannosyl-transferase 1 (747 aa).

The next 9 membrane-spanning stretches (helical) occupy residues 8 to 28 (PVVV…MGLL), 40 to 60 (VVFD…QIFF), 68 to 88 (FGHM…NFLW), 99 to 119 (VPVW…VPMA), 122 to 142 (IVLE…LMLI), 154 to 174 (LLES…LKFF), 183 to 203 (SLSW…AVGI), 206 to 226 (MGVF…WHLL), and 269 to 289 (LLVI…ILVF). 3 consecutive MIR domains span residues 318-381 (PLEV…VKDP), 392-449 (PRPV…LEIV), and 453-513 (SDTD…VEEH). Residues Asn-435, Asn-471, and Asn-539 are each glycosylated (N-linked (GlcNAc...) asparagine). 3 helical membrane passes run 597-617 (IVIW…SLWY), 636-656 (WVLA…PFFL), and 661-681 (LFLY…PVVL).

This sequence belongs to the glycosyltransferase 39 family. In terms of assembly, interacts with POMT2. As to expression, widely expressed. Highly expressed in testis, heart and pancreas. Detected at lower levels in kidney, skeletal muscle, brain, placenta, lung and liver.

Its subcellular location is the endoplasmic reticulum membrane. It carries out the reaction a di-trans,poly-cis-dolichyl beta-D-mannosyl phosphate + L-seryl-[protein] = 3-O-(alpha-D-mannosyl)-L-seryl-[protein] + a di-trans,poly-cis-dolichyl phosphate + H(+). It catalyses the reaction a di-trans,poly-cis-dolichyl beta-D-mannosyl phosphate + L-threonyl-[protein] = 3-O-(alpha-D-mannosyl)-L-threonyl-[protein] + a di-trans,poly-cis-dolichyl phosphate + H(+). It participates in protein modification; protein glycosylation. Its activity is regulated as follows. Slightly activated by Mg(2+) and inhibited by both Ca(+) and Mn(2+). EDTA ha no effect on activity in vitro. Its function is as follows. Transfers mannosyl residues to the hydroxyl group of serine or threonine residues. Coexpression of both POMT1 and POMT2 is necessary for enzyme activity, expression of either POMT1 or POMT2 alone is insufficient. Essentially dedicated to O-mannosylation of alpha-DAG1 and few other proteins but not of cadherins and protocaherins. The chain is Protein O-mannosyl-transferase 1 (POMT1) from Homo sapiens (Human).